The chain runs to 2300 residues: MKGHQFKSWIFELREILREIKNSHYFLDSWTQFTSVGSFIHIFFHQERFIKLFDPRIWSILLSRNSQGSTSNRYFTIKGVVLFVVAVLIYRINNRNMVERKNLYLTGLLPIPMNSIGPRNDTLEESFGSSNINRLIVSLLYLPKGKKISESCFLDPKESTWVLPITKKCIMPESNWGSRWWRNWIGKKRDSSCKISNETVAGIEISFKEKDIKYLEFLFVYYMDDPIHKDHDWELFDRLSPRKRRNIINLNSGQLFEILVKHWICYLMSAFREKIPIEVEGFFKQQGAGSTIQSNDIEHVSHLFSRNKWAISLQNCAQFHMWQFRQDLFVSWGKNPHESDFLRNVSRENWIWLDNVWLVNKDRFFSKVRNVSSNIQYDSTRSSFVQVTDSSQLKGSSDQSRDHFDSISNEDSKYHTLINQREIQQLKERSILWDPSFLQTERTEIESDRFPKCLSGYSSMSMSRLFTEREKQMIIHLLPEEIEEFLGNPTRSIRSFFSDRWSELHLGSNPIERSTRDQKLLKKQQDVSFVPSRRSENKEMVNIFKIITYLQNTVSIHPISSDPGCDMVPKDEPDMDSSNKISFLNKNPFFDLFHLFHDRNRGGYTLHHDFESEERFQEMADRFTLSITEPDLVYHKGFAFSIDSYGLDQKQFLNEVFNSRDESNKKSLLVLPPSFYEENESFYRRIRKKWVRISCGNDLEDPKPKIVVFASNNIMEAVNQYILIRNLIQIQYSTYGYIRNVLNRFFLMNRSDRNFEYGIQRDQIGNDTLNHRTIMKYTINQHLSNLKKSQKKWFDPLIFISRTERSMNRDPHAYRYKWSNGSKNFQEHLEHFVSEQKSRFQVVFDRLRINQYSIDWSEVIDKKDLSKSLRFFLSKSLLFLSKLLLFLSNSLPFFFVSFGNIPIHRSEIHIYELKGPNDQLCNQLLESIGLQIIHLKKWKLFLLDDHDTSQKSKFLINGGTISPFLFNKIPKWMIDSFHSRNNRRKSFDNTDSYFSMISHDQDNWLNPVKPFHRSSLISSFYKANRLRFLNNPHRFCFYCNKRFPFYVEKARINNSDFTYGQFLNILFIRKKIFSLCGGKKKHAFLERDTISPIESQVSNIFIPNDFPQSGDETYNLYKSFHFPIRSNPFVRRAIYSIADISGTPLTEGQIVNFERTYCQPLSDMNLSDSEGKNLHQYLNFNSNMGLIHTPCSEKYLPSEKRKKRSLCIKKCVEKGQMYRTFQRDSAFSTLSKWNLFQTYMPWFLTSTGYKYLNLIFLDTFSDLLPILSSSPKFVSIFHDIMYGSDISWRILQKKLCLPQRNLISEISSKCLHNLLLSEEMIHRNNESPLISTHLRSPNVREFLYSILFLLLVAGYLVRTHLLFVSRASSELQTEFEKVKSLMIPSYMIELRKLLDRYPTSELNSFWLKNLFLVALEQLGDSLEEIRGSASGGNMLLGGGPAYGVKSIRSKKKYLNINLIDIIDLISIIPNPINRITFSRNTRCLSHTSKEIYSLIRKRKNVNGDWIDDKIESWVANSDSIDDEEREFLVQFSTLTTEKRIDQILLSLTHSDHLSKNDSGYQMIEQPGAIYLRYLVDIHKKYLMNYEFNTSCLAERRIFLAHYQTITYSQTSCGANSFHFPSHGKPFSLRLALSPSRGILVIGSIGTGRSYLVKYLATNSYVPFITVFLNKFLDNKPKGFLFDDIDIDDSDDIDASDDIDASDDIDASDDIDRDLDTELELLTMMNALTMDMMPEIDRFYITLQFELAKAMSPCIIWIPNIHDLDVNESNYLSLGLLVNYLSRDCERCSTRNILVIASTHIPQKVDPALIAPNKLNTCIKIRRLLIPQQRKHFFTLSYTRGFHLEKKMFHTNGFGSITMGSNARDLVALTNEALSISITQKKSIIDTNAIRSALHRQTWDLRSQVRSVQDHGILFYQIGRAVAQNVLLSNCPIDPISIYMKKKSCNEGDSYLYKWYFELGTSMKKLTILLYLLSCSAGSVAQDLWSLPGPDEKNGITSYGLVENDSDLVHGLLEVEGALVGSSRTEKDCSQFDNDRVTLLLRPEPRNPLDMMQNGSCSIVDQRFLYEKYESEFEEGAGEGALDPQQIEEDLFNHIVWAPRIWRPWGFLFDCIERTNELGFPYWARSFRGKRIIYDEEDELQENDSEFLQSGTMQYQTRDRSSKEQGFFRISQFIWDPADPLFFLFKDQPFVSVFSHREFFADEEMSKGLLTSQTDPPTSIYKRWFIKNTQEKHFELLIHRQRWLRTNSSLSNGSFRSNTPSESYQYLSNLFLSNARLLDQMTKTLLRKRWLFPDEMKIGFM.

1642–1649 (GSIGTGRS) lines the ATP pocket.

It belongs to the Ycf2 family.

It localises to the plastid. It is found in the chloroplast stroma. Functionally, probable ATPase of unknown function. Its presence in a non-photosynthetic plant (Epifagus virginiana) and experiments in tobacco indicate that it has an essential function which is probably not related to photosynthesis. The sequence is that of Protein Ycf2 from Vitis vinifera (Grape).